A 337-amino-acid polypeptide reads, in one-letter code: Anthranilate phosphoribosyltransferase (337 aa).

Residues Gly-81, Gly-84–Asp-85, Ser-89, Asn-91–Thr-94, Lys-109–Ser-117, and Ala-121 contribute to the 5-phospho-alpha-D-ribose 1-diphosphate site. Residue Gly-81 coordinates anthranilate. Ser-93 contributes to the Mg(2+) binding site. An anthranilate-binding site is contributed by Asn-112. Arg-167 is a binding site for anthranilate. The Mg(2+) site is built by Asp-226 and Glu-227.

It belongs to the anthranilate phosphoribosyltransferase family. In terms of assembly, homodimer. Mg(2+) is required as a cofactor.

The catalysed reaction is N-(5-phospho-beta-D-ribosyl)anthranilate + diphosphate = 5-phospho-alpha-D-ribose 1-diphosphate + anthranilate. It participates in amino-acid biosynthesis; L-tryptophan biosynthesis; L-tryptophan from chorismate: step 2/5. Its function is as follows. Catalyzes the transfer of the phosphoribosyl group of 5-phosphorylribose-1-pyrophosphate (PRPP) to anthranilate to yield N-(5'-phosphoribosyl)-anthranilate (PRA). This Bradyrhizobium sp. (strain ORS 278) protein is Anthranilate phosphoribosyltransferase.